The chain runs to 434 residues: Chaperone SurA (434 aa).

The first 22 residues, 1–22 (MKKWKSSLLGIAIWSLAASSMA), serve as a signal peptide directing secretion. 2 PpiC domains span residues 173 to 274 (TVQF…KVND) and 283 to 383 (VTEV…EVLD).

Its subcellular location is the periplasm. The enzyme catalyses [protein]-peptidylproline (omega=180) = [protein]-peptidylproline (omega=0). Chaperone involved in the correct folding and assembly of outer membrane proteins. Recognizes specific patterns of aromatic residues and the orientation of their side chains, which are found more frequently in integral outer membrane proteins. May act in both early periplasmic and late outer membrane-associated steps of protein maturation. This chain is Chaperone SurA, found in Photobacterium profundum (strain SS9).